Reading from the N-terminus, the 1115-residue chain is MDTFRKWLNKPKADDKSLLARFYHADRSLTAVASELDSFDGRAEPDRCTRLVSRLRQNQDKVLAITNMIMEELLGEDRDPRAFRAKFPEEVLQENLAGQLWFGAECLAAGSSILNRESESKEMRPLAQAVTKSLGHVRVLLRDQCLRNNVPNSKTLHLDFNDSNTEQLYESLKIFDHLFAEFELSYVSAMVQVKSRHEYEMQQWIGVLFSETLQRSLKVGLLDQDMVDAFDPGLMFSIPRLAIVAGLVVYAKGPLNMDMPGDQLSEMFRPFRTILIKIRDLLRNLSKQELYQLEKLLCTNEDINTKVPLGSSSIEAPSPEHNNSSSTTNTSNNNNNNTNNNNSSSGSDCTNNDKTGTTTNTHKPVERLVDHRNNNTTNSQQTSSCSVNAAATTPATSSRTRTPPSILSPSAGSTPTASPAPSPTPSHSIASTSSAATTSTNSPAHWSDYDDDDEDDDDDDVHADVEEDEDESGILDSDEHDLNDDSDSEVDEFFEAQLKAIVAAVDCAPGYLIPDCASGYLISNTNLGNLLQPQQVPLTDNFVASEDDELGNPTAVDQQQQPQQQLEHHQQQLQQQQHTEDEPSTSAAMLAARRTLQRLRLPSSSSDNEPSSNNQQMTIKSPSEQTTTRSSSNRHRHHSHHHHHHHHSHHHHHHQPTAAVAVAAAQDEQHNNNQPHSHSHSSSHHHHHNHQSHSHPHRANRSTRKRCSQEHCETITTTKTTSGGEQQTEDSLDSSTASSLSDDVSLAMRNTTARLKFKSTENLLHRLFVCIAGVADQLQTNFASDLRQILRSVFLMNMSSAQEDIDIPEKTKESELFEFRASENDVIQESAGSNQSIYSAEEVNPELDNVFNTNTGTNGARHSAGATMQRNNTIDLATVQSSNSGNSSSSNSSSSSSAARSHVARSRSLGDHDQASTSSSQQQQRELQLQLQQQQQQQAQMQQQLQRHRNNSVGSNSPSSASSTSSNSEHNSPVSTRSGSRRRLPSNTTTTLSTSIGTAATTPTGATTTGVTTTTTMSPPAWIPDGKAPRCMSCQTPFTVVRRRHHCRNCGGVFCGVCSNASAPLPKYGLTKAVRVCRECFMREVRQSHSHGQSQSQIHSPTQQAGGRPQAASAS.

Disordered regions lie at residues 308–488 (PLGS…DSDS), 545–586 (SEDD…PSTS), 600–742 (RLPS…SLSD), and 879–1027 (VQSS…PDGK). Low complexity predominate over residues 322 to 361 (NNSSSTTNTSNNNNNNTNNNNSSSGSDCTNNDKTGTTTNT). Positions 363–373 (KPVERLVDHRN) are enriched in basic and acidic residues. Composition is skewed to low complexity over residues 374–417 (NNTT…TPTA) and 425–444 (PSHSIASTSSAATTSTNSPA). Residues 449 to 488 (YDDDDEDDDDDDVHADVEEDEDESGILDSDEHDLNDDSDS) are compositionally biased toward acidic residues. Low complexity-rich tracts occupy residues 558 to 577 (QQQQPQQQLEHHQQQLQQQQ) and 600 to 614 (RLPSSSSDNEPSSNN). Residues Ser-603 and Ser-604 each carry the phosphoserine modification. Polar residues predominate over residues 615–628 (QQMTIKSPSEQTTT). Residues 632–655 (SNRHRHHSHHHHHHHHSHHHHHHQ) are compositionally biased toward basic residues. The segment covering 658 to 676 (AAVAVAAAQDEQHNNNQPH) has biased composition (low complexity). A compositionally biased stretch (basic residues) spans 677 to 706 (SHSHSSSHHHHHNHQSHSHPHRANRSTRKR). 3 stretches are compositionally biased toward low complexity: residues 714–726 (TITTTKTTSGGEQ), 733–742 (DSSTASSLSD), and 881–901 (SSNSGNSSSSNSSSSSSAARS). Position 908 is a phosphoserine (Ser-908). 2 stretches are compositionally biased toward low complexity: residues 921–975 (QQQQ…SPVS) and 988–1020 (TTTTLSTSIGTAATTPTGATTTGVTTTTTMSPP). The FYVE-type zinc finger occupies 1025-1085 (DGKAPRCMSC…VCRECFMREV (61 aa)). Zn(2+)-binding residues include Cys-1031, Cys-1034, Cys-1047, Cys-1050, Cys-1055, Cys-1058, Cys-1077, and Cys-1080. A disordered region spans residues 1088 to 1115 (SHSHGQSQSQIHSPTQQAGGRPQAASAS). Residues 1090–1100 (SHGQSQSQIHS) are compositionally biased toward low complexity.

This sequence belongs to the lst-2 family.

Its function is as follows. Negative regulator of epidermal growth factor receptor (EGFR) signaling. The sequence is that of Lateral signaling target protein 2 homolog from Drosophila grimshawi (Hawaiian fruit fly).